We begin with the raw amino-acid sequence, 357 residues long: Heat-inducible transcription repressor HrcA (357 aa).

This sequence belongs to the HrcA family.

Functionally, negative regulator of class I heat shock genes (grpE-dnaK-dnaJ and groELS operons). Prevents heat-shock induction of these operons. In Chlorobium phaeovibrioides (strain DSM 265 / 1930) (Prosthecochloris vibrioformis (strain DSM 265)), this protein is Heat-inducible transcription repressor HrcA.